We begin with the raw amino-acid sequence, 95 residues long: Acylphosphatase (95 aa).

The 88-residue stretch at 8-95 folds into the Acylphosphatase-like domain; sequence RAKILVRGKV…GNFRTFEIKK (88 aa). Active-site residues include arginine 23 and asparagine 41.

The protein belongs to the acylphosphatase family.

The enzyme catalyses an acyl phosphate + H2O = a carboxylate + phosphate + H(+). This chain is Acylphosphatase (acyP), found in Leptospira interrogans serogroup Icterohaemorrhagiae serovar copenhageni (strain Fiocruz L1-130).